The primary structure comprises 341 residues: Mitochondrial glutathione transporter SLC25A40 (341 aa).

Solcar repeat units lie at residues 14–132 (ITPS…LRDI), 140–224 (RAEI…VKQS), and 234–328 (PTFA…GKSF). A run of 6 helical transmembrane segments spans residues 20–40 (MIASSMGALLTSFFVTPLDVV), 104–124 (LWSGLPPTLVMAVPATVIYFT), 143–163 (IASLVAGATARLWSATLISPL), 200–221 (WGPTVLRDVPFSALYWHNYELV), 236–256 (FAISFTAGAVSGSIAAIVTLP), and 299–319 (GLFAGLIPRLIKVAPACAIMI).

The protein belongs to the mitochondrial carrier (TC 2.A.29) family.

It is found in the mitochondrion inner membrane. The enzyme catalyses glutathione(in) = glutathione(out). Functionally, probable mitochondrial transporter required for glutathione import into mitochondria. Glutathione, which plays key roles in oxidative metabolism, is produced exclusively in the cytosol and is imported in many organelles. Mitochondrial glutathione is required for the activity and stability of proteins containing iron-sulfur clusters. This Xenopus tropicalis (Western clawed frog) protein is Mitochondrial glutathione transporter SLC25A40.